Here is a 393-residue protein sequence, read N- to C-terminus: Yellow-related salivary protein SP03B (393 aa).

The first 18 residues, 1 to 18 (MKIFLCLIAVVFLQGVVG), serve as a signal peptide directing secretion. An N-linked (GlcNAc...) asparagine glycan is attached at asparagine 29.

The protein belongs to the major royal jelly protein family. Female salivary gland (at protein level).

The protein resides in the secreted. In terms of biological role, probably modulates blood feeding of sand flies on vertebrate species by binding and sequestering different mediators involved in the host response. Binds biogenic amines. Binds serotonin with high affinity. Poorly binds histamine. Does not bind dopamine, noradrenaline, adrenaline and octopamine. The sequence is that of Yellow-related salivary protein SP03B from Phlebotomus perniciosus (Phlebotomine sand fly).